A 108-amino-acid chain; its full sequence is T-cell acute lymphocytic leukemia protein 2 homolog (108 aa).

The bHLH domain maps to 2 to 54 (TRKIFTNTRERWRQQSVNNAFAKLRKLIPTHPPDKKLSKNETLRLAMRYINFL). The segment at 76-108 (GLFPPKTRLPDEDDRTLLNDYRVPSPGPSHGAP) is disordered.

This is T-cell acute lymphocytic leukemia protein 2 homolog (Tal2) from Mus musculus (Mouse).